The primary structure comprises 307 residues: Ornithine carbamoyltransferase (307 aa).

Carbamoyl phosphate is bound by residues 56-59, Gln-83, Arg-107, and 134-137; these read STRT and HPCQ. L-ornithine-binding positions include Asn-165, Asp-223, and 227–228; that span reads SM. Residues 263 to 264 and Arg-291 each bind carbamoyl phosphate; that span reads CL.

It belongs to the aspartate/ornithine carbamoyltransferase superfamily. OTCase family.

It localises to the cytoplasm. It carries out the reaction carbamoyl phosphate + L-ornithine = L-citrulline + phosphate + H(+). It functions in the pathway amino-acid biosynthesis; L-arginine biosynthesis; L-arginine from L-ornithine and carbamoyl phosphate: step 1/3. In terms of biological role, reversibly catalyzes the transfer of the carbamoyl group from carbamoyl phosphate (CP) to the N(epsilon) atom of ornithine (ORN) to produce L-citrulline. This is Ornithine carbamoyltransferase from Cupriavidus pinatubonensis (strain JMP 134 / LMG 1197) (Cupriavidus necator (strain JMP 134)).